Reading from the N-terminus, the 393-residue chain is STE20-related kinase adapter protein alpha (393 aa).

Residues Ser-2 and Ser-9 each carry the phosphoserine modification. The Protein kinase domain occupies 32–341; sequence YELLSVIGKG…ASTLLNHSFF (310 aa). Thr-381 is modified (phosphothreonine; by LKB1).

This sequence belongs to the protein kinase superfamily. STE Ser/Thr protein kinase family. STE20 subfamily. Component of a trimeric complex composed of STK11/LKB1, STRAD (STRADA or STRADB) and CAB39/MO25 (CAB39/MO25alpha or CAB39L/MO25beta): the complex tethers STK11/LKB1 in the cytoplasm and stimulates its catalytic activity. Expressed in liver.

Its subcellular location is the nucleus. The protein localises to the cytoplasm. Functionally, pseudokinase which, in complex with CAB39/MO25 (CAB39/MO25alpha or CAB39L/MO25beta), binds to and activates STK11/LKB1. Adopts a closed conformation typical of active protein kinases and binds STK11/LKB1 as a pseudosubstrate, promoting conformational change of STK11/LKB1 in an active conformation. In Rattus norvegicus (Rat), this protein is STE20-related kinase adapter protein alpha (Strada).